Consider the following 313-residue polypeptide: Probable cell division protein WhiA (313 aa).

The H-T-H motif DNA-binding region spans 277–311; the sequence is SLKEVAAQVPDGPISKSGVNHRFQKIREMAQQLKE.

Belongs to the WhiA family.

Its function is as follows. Involved in cell division and chromosome segregation. The sequence is that of Probable cell division protein WhiA from Lactobacillus gasseri (strain ATCC 33323 / DSM 20243 / BCRC 14619 / CIP 102991 / JCM 1131 / KCTC 3163 / NCIMB 11718 / NCTC 13722 / AM63).